A 245-amino-acid polypeptide reads, in one-letter code: E3 ubiquitin-protein ligase RNF138 (245 aa).

Position 2 is an N-acetylalanine (Ala-2). The RING-type zinc finger occupies 18–58 (CPVCQEVLKTPVRTTACQHVFCRKCFLTAMRESGAHCPLCR). Zn(2+)-binding residues include Cys-86, Cys-89, His-101, and Cys-105. The C2HC RNF-type zinc-finger motif lies at 86–105 (CRCCAKQIKFYRMRHHYKSC). The interval 125–154 (QDSVGNSNRSETSTSDNTETYQENTSSSGH) is disordered. A Phosphothreonine modification is found at Thr-142. 2 consecutive C2H2-type zinc fingers follow at residues 157–180 (FKCPLCQESNFTRQRLLDHCNSNH) and 187–215 (VTCPICVSLPWGDPSQITRNFVSHLNQRH). In terms of domain architecture, UIM spans 225 to 243 (LQLDEETQYQTAVEESFQV).

Interacts with NLK. Interacts with XRCC5/Ku80. Interacts with RBBP8/CtIP. In terms of processing, auto-ubiquitinated.

It localises to the chromosome. It catalyses the reaction S-ubiquitinyl-[E2 ubiquitin-conjugating enzyme]-L-cysteine + [acceptor protein]-L-lysine = [E2 ubiquitin-conjugating enzyme]-L-cysteine + N(6)-ubiquitinyl-[acceptor protein]-L-lysine.. The protein operates within protein modification; protein ubiquitination. E3 ubiquitin-protein ligase involved in DNA damage response by promoting DNA resection and homologous recombination. Recruited to sites of double-strand breaks following DNA damage and specifically promotes double-strand break repair via homologous recombination. Two different, non-exclusive, mechanisms have been proposed. According to a report, regulates the choice of double-strand break repair by favoring homologous recombination over non-homologous end joining (NHEJ): acts by mediating ubiquitination of XRCC5/Ku80, leading to remove the Ku complex from DNA breaks, thereby promoting homologous recombination. According to another report, cooperates with UBE2Ds E2 ubiquitin ligases (UBE2D1, UBE2D2, UBE2D3 or UBE2D4) to promote homologous recombination by mediating ubiquitination of RBBP8/CtIP. Together with NLK, involved in the ubiquitination and degradation of TCF/LEF. Also exhibits auto-ubiquitination activity in combination with UBE2K. May act as a negative regulator in the Wnt/beta-catenin-mediated signaling pathway. This Homo sapiens (Human) protein is E3 ubiquitin-protein ligase RNF138.